Consider the following 511-residue polypeptide: Histidine ammonia-lyase (511 aa).

Residues 142-144 constitute a cross-link (5-imidazolinone (Ala-Gly)); that stretch reads ASG. A 2,3-didehydroalanine (Ser) modification is found at S143.

Belongs to the PAL/histidase family. Post-translationally, contains an active site 4-methylidene-imidazol-5-one (MIO), which is formed autocatalytically by cyclization and dehydration of residues Ala-Ser-Gly.

The protein localises to the cytoplasm. The catalysed reaction is L-histidine = trans-urocanate + NH4(+). The protein operates within amino-acid degradation; L-histidine degradation into L-glutamate; N-formimidoyl-L-glutamate from L-histidine: step 1/3. The polypeptide is Histidine ammonia-lyase (Caulobacter sp. (strain K31)).